The chain runs to 89 residues: Phasin PhaP (89 aa).

Helix stretches follow at residues 3–26 (TQFF…TWME) and 39–83 (DTFE…ALRQ).

As to quaternary structure, homotetramer.

Its subcellular location is the cellular thylakoid membrane. The protein resides in the cytoplasm. Its pathway is biopolymer metabolism; poly-(R)-3-hydroxybutanoate biosynthesis. Its function is as follows. A phasin, it attaches to the polyhydroxybutyrate (PHB) granule surface regulating the number and size of PHB granules within a cell. It probably also acts as a regulator affecting the biosynthetic activity of PHB synthase in vivo. This chain is Phasin PhaP, found in Synechocystis sp. (strain ATCC 27184 / PCC 6803 / Kazusa).